A 900-amino-acid chain; its full sequence is Endoglucanase H (900 aa).

The N-terminal stretch at methionine 1–serine 44 is a signal peptide. Residues alanine 45–tyrosine 298 enclose the GH26 domain. Glutamate 131 serves as the catalytic Proton donor. Glutamate 244 (nucleophile) is an active-site residue. The tract at residues glutamate 300 to asparagine 630 is catalytic. Residues glycine 303 to alanine 326 form a disordered region. Over residues serine 306–proline 324 the composition is skewed to low complexity. Glutamate 460 functions as the Proton donor in the catalytic mechanism. The active-site Nucleophile is the glutamate 565. Residues alanine 655 to isoleucine 900 form the CBM11 domain. Positions proline 827–isoleucine 900 constitute a Dockerin domain.

In the N-terminal section; belongs to the glycosyl hydrolase 5 (cellulase A) family. The protein in the C-terminal section; belongs to the glycosyl hydrolase 26 family.

The catalysed reaction is Endohydrolysis of (1-&gt;4)-beta-D-glucosidic linkages in cellulose, lichenin and cereal beta-D-glucans.. Functionally, this enzyme catalyzes the endohydrolysis of 1,4-beta-glucosidic linkages in cellulose, lichenin and cereal beta-D-glucans. This Acetivibrio thermocellus (strain ATCC 27405 / DSM 1237 / JCM 9322 / NBRC 103400 / NCIMB 10682 / NRRL B-4536 / VPI 7372) (Clostridium thermocellum) protein is Endoglucanase H (celH).